The sequence spans 208 residues: Pyridoxine/pyridoxamine 5'-phosphate oxidase (208 aa).

FMN is bound by residues 53–58 (RTVLLK), 68–69 (YS), Lys-75, and Gln-100. Lys-58 contributes to the substrate binding site. Substrate-binding residues include Tyr-118, Arg-122, and Ser-126. FMN contacts are provided by residues 135–136 (QS) and Trp-180. A substrate-binding site is contributed by 186-188 (RLH). Position 190 (Arg-190) interacts with FMN.

It belongs to the pyridoxamine 5'-phosphate oxidase family. Homodimer. Requires FMN as cofactor.

It carries out the reaction pyridoxamine 5'-phosphate + O2 + H2O = pyridoxal 5'-phosphate + H2O2 + NH4(+). It catalyses the reaction pyridoxine 5'-phosphate + O2 = pyridoxal 5'-phosphate + H2O2. The protein operates within cofactor metabolism; pyridoxal 5'-phosphate salvage; pyridoxal 5'-phosphate from pyridoxamine 5'-phosphate: step 1/1. Its pathway is cofactor metabolism; pyridoxal 5'-phosphate salvage; pyridoxal 5'-phosphate from pyridoxine 5'-phosphate: step 1/1. In terms of biological role, catalyzes the oxidation of either pyridoxine 5'-phosphate (PNP) or pyridoxamine 5'-phosphate (PMP) into pyridoxal 5'-phosphate (PLP). The protein is Pyridoxine/pyridoxamine 5'-phosphate oxidase of Xylella fastidiosa (strain Temecula1 / ATCC 700964).